A 125-amino-acid polypeptide reads, in one-letter code: MNEKWIVERVEREGGRLWLYVNDAPVPLARVTPKRHMLVDSDALAFAYILETDDRFLYVMIPKPWWPELKAALDAKEPVWLRCGERTLELEQFHDELSYLLENIRGNANYGEALEQAVQDVFFEQ.

The protein belongs to the UPF0738 family.

The polypeptide is UPF0738 protein GK0828 (Geobacillus kaustophilus (strain HTA426)).